We begin with the raw amino-acid sequence, 346 residues long: Glucose-6-phosphatase 3 (346 aa).

At 1–24 (MESTLSAGIIMAEALQNRLPGLEN) the chain is on the lumenal side. A helical transmembrane segment spans residues 25–45 (MWLWVTFLGDPKNLFQFCFPA). Over 46–56 (AYYASRRLGIS) the chain is Cytoplasmic. Residues 57–77 (VLWITFIAEWLNLVFKWFLFG) traverse the membrane as a helical segment. Over 78–108 (DRPFWWVHESGYSTQTPIQIHQFPSSCETGP) the chain is Lumenal. A substrate-binding site is contributed by Arg79. Residues 109–129 (GSPSGHCMITGAALWPVMTAI) traverse the membrane as a helical segment. His114 serves as the catalytic Proton donor. The Cytoplasmic segment spans residues 130-138 (SSQVASRSR). A helical membrane pass occupies residues 139-159 (SPWVRVIPGLAYCTFLLAVGL). Over 160 to 167 (SRVFLLAH) the chain is Lumenal. A substrate-binding site is contributed by Arg161. The active-site Nucleophile is the His167. The helical transmembrane segment at 168–186 (FPHQVLGGLIVGAALGWLM) threads the bilayer. Residues 187–197 (SPRVPMERELS) lie on the Cytoplasmic side of the membrane. A helical membrane pass occupies residues 198–218 (FYGLTALALMLGASLMYWTLF). Residues 219–254 (TLGLDLSWSINLASKWCERPEWVHMDSRPFASLSRD) lie on the Lumenal side of the membrane. A helical transmembrane segment spans residues 255–273 (SGSALGLGIALHTPCYAQI). Residues 274–283 (RRAHLGNGQK) lie on the Cytoplasmic side of the membrane. Residues 284-304 (IACFVLAMGLLVFLEWLGYPP) form a helical membrane-spanning segment. The Lumenal segment spans residues 305–307 (QIS). A helical transmembrane segment spans residues 308–328 (LFYIFNFLKYTLWPCLVLALV). Residues 329-346 (PWVVHTLSDQEAPPIRSS) are Cytoplasmic-facing.

This sequence belongs to the glucose-6-phosphatase family. In terms of tissue distribution, widely expressed. Highly expressed in heart and testis and to a lower extent in spleen, stomach, small intestine, skeletal muscle and uterus. Expressed in muscle, brain, thymus, lung, kidney, spleen and pancreas (at protein level). In the brain, expressed in astrocytes (at protein level).

The protein resides in the endoplasmic reticulum membrane. The enzyme catalyses D-glucose 6-phosphate + H2O = D-glucose + phosphate. The protein operates within carbohydrate biosynthesis; gluconeogenesis. With respect to regulation, inhibited by vanadate. Hydrolyzes glucose-6-phosphate to glucose in the endoplasmic reticulum. May form with the glucose-6-phosphate transporter (SLC37A4/G6PT) a ubiquitously expressed complex responsible for glucose production through glycogenolysis and gluconeogenesis. Probably required for normal neutrophil function. The sequence is that of Glucose-6-phosphatase 3 (G6pc3) from Mus musculus (Mouse).